Consider the following 312-residue polypeptide: DNA-directed RNA polymerase subunit alpha (312 aa).

The alpha N-terminal domain (alpha-NTD) stretch occupies residues 1-226 (MIEFEKPKIT…DHLNLFVDLS (226 aa)). An alpha C-terminal domain (alpha-CTD) region spans residues 243-312 (TERVLDKIIE…ELGLSLKKRK (70 aa)).

This sequence belongs to the RNA polymerase alpha chain family. In terms of assembly, homodimer. The RNAP catalytic core consists of 2 alpha, 1 beta, 1 beta' and 1 omega subunit. When a sigma factor is associated with the core the holoenzyme is formed, which can initiate transcription.

The enzyme catalyses RNA(n) + a ribonucleoside 5'-triphosphate = RNA(n+1) + diphosphate. In terms of biological role, DNA-dependent RNA polymerase catalyzes the transcription of DNA into RNA using the four ribonucleoside triphosphates as substrates. The protein is DNA-directed RNA polymerase subunit alpha of Lactococcus lactis subsp. lactis (strain IL1403) (Streptococcus lactis).